Consider the following 266-residue polypeptide: uncharacterized protein (266 aa).

Residues I13 to H33 form a helical membrane-spanning segment.

This sequence belongs to the LicD transferase family.

It is found in the membrane. This is an uncharacterized protein from Rickettsia prowazekii (strain Madrid E).